We begin with the raw amino-acid sequence, 164 residues long: Cytochrome c-type biogenesis protein CcmE (164 aa).

Topologically, residues 1 to 8 (MNPRRQKR) are cytoplasmic. Residues 9-29 (LIVISAIVLVIGAAIGLMLYA) traverse the membrane as a helical; Signal-anchor for type II membrane protein segment. The Periplasmic portion of the chain corresponds to 30–164 (LSQNIDLFYT…QAYSTPKVSG (135 aa)). Heme is bound by residues H132 and Y136.

This sequence belongs to the CcmE/CycJ family.

It is found in the cell inner membrane. Heme chaperone required for the biogenesis of c-type cytochromes. Transiently binds heme delivered by CcmC and transfers the heme to apo-cytochromes in a process facilitated by CcmF and CcmH. The polypeptide is Cytochrome c-type biogenesis protein CcmE (Pseudoalteromonas atlantica (strain T6c / ATCC BAA-1087)).